A 599-amino-acid polypeptide reads, in one-letter code: PR domain zinc finger protein 5 (599 aa).

The SET domain occupies 8 to 124 (DRFALKSSRV…TDTELLIGYL (117 aa)). 12 C2H2-type zinc fingers span residues 167-190 (FACP…QSLH), 199-221 (FKCE…FEQH), 231-256 (FVCK…ENVH), 264-286 (LICS…RKIH), 289-311 (FDCQ…MITH), 317-339 (YNCE…KVIH), 345-367 (YQCK…KKTH), 373-395 (FQCD…LLIH), 401-424 (FKCH…QVVH), 430-452 (YRCE…KKTH), 458-480 (KVCP…IRSH), and 486-508 (YQCP…IRTH). Residues 514–536 (YQCSECSKAFSQKRGLDEHKRTH) form a C2H2-type 13; degenerate zinc finger. 2 consecutive C2H2-type zinc fingers follow at residues 542–564 (FQCD…KMTH) and 571–594 (AECH…DNIH).

This sequence belongs to the class V-like SAM-binding methyltransferase superfamily. As to quaternary structure, interacts with EHMT2/G9A, GFI1 and HDAC1.

It localises to the nucleus. In terms of biological role, sequence-specific DNA-binding transcription factor. Represses transcription at least in part by recruitment of the histone methyltransferase EHMT2/G9A and histone deacetylases such as HDAC1. Regulates hematopoiesis-associated protein-coding and microRNA (miRNA) genes. May regulate the expression of proteins involved in extracellular matrix development and maintenance, connective tissue components and molecules regulating cell migration and adhesion. May cause G2/M arrest and apoptosis in cancer cells. This Mus musculus (Mouse) protein is PR domain zinc finger protein 5 (Prdm5).